The primary structure comprises 350 residues: uncharacterized protein (350 aa).

Its function is as follows. May play a role in septum formation. This is an uncharacterized protein from Mycobacterium tuberculosis (strain CDC 1551 / Oshkosh).